The primary structure comprises 1372 residues: MAKPSVELTRELQDSIRRCLSQGAVLQQHHVKLETKPKKFEDRVLALTSWRLHLFLLKVPAKVESSFNVLEIRAFNTLSQNQILVETERGMVSMRLPSAESVDQVTRHVSSALSKVCPGPGCLIRRGNADTPEGPRDTSPNSETSTSTTHSVCGGFSETYAALCDYNGLHCREEVQWDVDTIYHAEDNREFNLLDFSHLESRDLALMVAALAYNQWFTKLYCKDLRLGSEVLEQVLHTLSKSGSLEELVLDNAGLKTDFVQKLAGVFGENGSCVLHALTLSHNPIEDKGFLSLSQQLLCFPSGLTKLCLAKTAISPRGLQALGQTFGANPAFASSLRYLDLSKNPGLLATDEANALYSFLAQPNALVHLDLSGTDCVIDLLLGALLHGCCSHLTYLNLARNSCSHRKGREAPPAFKQFFSSAYTLSHVNLSATKLPLEALRALLQGLSLNSHLSDLHLDLSSCELRSAGAQALQEQLGAVTCVGSLDLSDNGFDSDLLTLVPALGKNKSLKHLFLGKNFNVKAKTLEEILHKLVQLIQEEDCSLQSLSVADSRLKLRTSILINALGSNTCLAKVDLSGNGMEDIGAKMLSKALQINSSLRTILWDRNNTSALGFLDIARALESNHTLRFMSFPVSDISQAYRSAPERTEDVWQKIQWCLVRNNHSQTCPQEQAFRLQQGLVTSSAEQMLQRLCGRVQEEVRALRLCPLEPVQDELLYARDLIKDAKNSRALFPSLYELGHVLANDGPVRQRLESVASEVSKAVDKELQVILESMVSLTQELCPVAMRVAEGHNKMLSNVAERVTVPRNFIRGALLEQAGQDIQNKLDEVKLSVVTYLTSSIVDEILQELYHSHKSLARHLTQLRTLSDPPGCPGQGQDLSSRGRGRNHDHEETTDDELGTNIDTMAIKKQKRCRKIRPVSAFISGSPQDMESQLGNLGIPPGWFSGLGGSQPTASGSWEGLSELPTHGYKLRHQTQGRPRPPRTTPPGPGRPSMPAPGTRQENGMATRLDEGLEDFFSRRVLEESSSYPRTLRTVRPGLSEAPLPPLQKKRRRGLFHFRRPRSFKGDRGPGSPTTGLLLPPPPPPPPTQESPPSPDPPSLGNNSSPCWSPEEESSLLPGFGGGRGPSFRRKMGTEGSEPGEGGPAPGTAQQPRVHGVALPGLERAKGWSFDGKREGPGPDQEGSTQAWQKRRSSDDAGPGSWKPPPPPQSTKPSFSAMRRAEATWHIAEESAPNHSCQSPSPASQDGEEEKEGTLFPERTLPARNAKLQDPALAPWPPKPVAVPRGRQPPQEPGVREEAEAGDAAPGVNKPRLRLSSQQDQEEPEVQGPPDPGRRTAPLKPKRTRRAQSCDKLEPDRRRPPDPTGTSEPGTD.

Residues 126–151 (RGNADTPEGPRDTSPNSETSTSTTHS) are disordered. Low complexity predominate over residues 138–151 (TSPNSETSTSTTHS). 10 LRR repeats span residues 244 to 264 (SLEE…QKLA), 274 to 295 (VLHA…SLSQ), 303 to 323 (GLTK…QALG), 335 to 357 (SLRY…NALY), 365 to 385 (ALVH…LGAL), 392 to 413 (HLTY…EAPP), 424 to 444 (TLSH…RALL), 455 to 475 (DLHL…ALQE), 482 to 501 (CVGS…LTLV), and 509 to 530 (SLKH…EEIL). Disordered regions lie at residues 865–900 (TLSD…ELGT), 970–1003 (KLRH…RQEN), and 1024–1372 (ESSS…PGTD). Residues 982–995 (PRTTPPGPGRPSMP) are compositionally biased toward pro residues. The tract at residues 1040–1073 (SEAPLPPLQKKRRRGLFHFRRPRSFKGDRGPGSP) is necessary for localization at the cell membrane. A compositionally biased stretch (basic residues) spans 1048-1063 (QKKRRRGLFHFRRPRS). Residues 1079–1098 (LPPPPPPPPTQESPPSPDPP) show a composition bias toward pro residues. Positions 1099–1109 (SLGNNSSPCWS) are enriched in low complexity. Composition is skewed to basic and acidic residues over residues 1163-1177 (ERAK…REGP) and 1219-1229 (RRAEATWHIAE). Polar residues predominate over residues 1233–1244 (PNHSCQSPSPAS). A compositionally biased stretch (basic and acidic residues) spans 1348–1361 (QSCDKLEPDRRRPP).

The protein belongs to the CARMIL family. In terms of tissue distribution, widely expressed, with much higher levels in fetal tissues than in adult ones. Up-regulated in certain cancer tissues.

It localises to the cytoplasm. The protein resides in the cell membrane. The sequence is that of Capping protein, Arp2/3 and myosin-I linker protein 3 from Homo sapiens (Human).